The chain runs to 258 residues: Small ribosomal subunit protein uS2 (258 aa).

The protein belongs to the universal ribosomal protein uS2 family.

The chain is Small ribosomal subunit protein uS2 from Streptococcus suis (strain 05ZYH33).